We begin with the raw amino-acid sequence, 188 residues long: MATYYSNDFRAGLKIMLDGEPYAVEASEFVKPGKGQAFARVKLRRLLTGTRVEKTFKSTDSAEGADVVDMNLTYLYNDGEFWHFMNNETFEQLSADAKAIGDNAKWLLDQAECIVTLWNGQPISVTPPNFVELEIVDTDPGLKGDTAGTGGKPATLSTGAVVKVPLFVQIGEVIKVDTRSGEYVSRVK.

N6-(3,6-diaminohexanoyl)-5-hydroxylysine is present on Lys-34.

This sequence belongs to the elongation factor P family. Is beta-lysylated on the epsilon-amino group of Lys-34 by the combined action of EpmA and EpmB, and then hydroxylated on the C5 position of the same residue by EpmC. Lysylation is critical for the stimulatory effect of EF-P on peptide-bond formation. The lysylation moiety would extend toward the peptidyltransferase center and stabilize the terminal 3-CCA end of the tRNA. The hydroxylation of the C5 position on Lys-34 would allow additional potential stabilizing hydrogen-bond interactions with the P-tRNA.

Its subcellular location is the cytoplasm. It functions in the pathway protein biosynthesis; polypeptide chain elongation. Its function is as follows. Involved in peptide bond synthesis. Alleviates ribosome stalling that occurs when 3 or more consecutive Pro residues or the sequence PPG is present in a protein, possibly by augmenting the peptidyl transferase activity of the ribosome. Modification of Lys-34 is required for alleviation. This chain is Elongation factor P, found in Shigella boydii serotype 18 (strain CDC 3083-94 / BS512).